We begin with the raw amino-acid sequence, 210 residues long: Thiamine-phosphate synthase (210 aa).

4-amino-2-methyl-5-(diphosphooxymethyl)pyrimidine contacts are provided by residues 34 to 38 (QLRHK) and Asn-66. Residues Asp-67 and Asp-86 each contribute to the Mg(2+) site. Ser-105 contacts 4-amino-2-methyl-5-(diphosphooxymethyl)pyrimidine. 131–133 (TSS) contacts 2-[(2R,5Z)-2-carboxy-4-methylthiazol-5(2H)-ylidene]ethyl phosphate. Lys-134 contributes to the 4-amino-2-methyl-5-(diphosphooxymethyl)pyrimidine binding site. Gly-162 contributes to the 2-[(2R,5Z)-2-carboxy-4-methylthiazol-5(2H)-ylidene]ethyl phosphate binding site.

It belongs to the thiamine-phosphate synthase family. Mg(2+) is required as a cofactor.

It catalyses the reaction 2-[(2R,5Z)-2-carboxy-4-methylthiazol-5(2H)-ylidene]ethyl phosphate + 4-amino-2-methyl-5-(diphosphooxymethyl)pyrimidine + 2 H(+) = thiamine phosphate + CO2 + diphosphate. It carries out the reaction 2-(2-carboxy-4-methylthiazol-5-yl)ethyl phosphate + 4-amino-2-methyl-5-(diphosphooxymethyl)pyrimidine + 2 H(+) = thiamine phosphate + CO2 + diphosphate. The catalysed reaction is 4-methyl-5-(2-phosphooxyethyl)-thiazole + 4-amino-2-methyl-5-(diphosphooxymethyl)pyrimidine + H(+) = thiamine phosphate + diphosphate. Its pathway is cofactor biosynthesis; thiamine diphosphate biosynthesis; thiamine phosphate from 4-amino-2-methyl-5-diphosphomethylpyrimidine and 4-methyl-5-(2-phosphoethyl)-thiazole: step 1/1. In terms of biological role, condenses 4-methyl-5-(beta-hydroxyethyl)thiazole monophosphate (THZ-P) and 2-methyl-4-amino-5-hydroxymethyl pyrimidine pyrophosphate (HMP-PP) to form thiamine monophosphate (TMP). This chain is Thiamine-phosphate synthase, found in Chlorobium limicola (strain DSM 245 / NBRC 103803 / 6330).